The following is a 207-amino-acid chain: UPF0319 protein VV2327 (207 aa).

The first 18 residues, 1–18 (MLRVLGLAGMLMSFNIHA), serve as a signal peptide directing secretion.

The protein belongs to the UPF0319 family.

This is UPF0319 protein VV2327 from Vibrio vulnificus (strain YJ016).